Here is a 74-residue protein sequence, read N- to C-terminus: ATP synthase subunit c (74 aa).

Transmembrane regions (helical) follow at residues 5-25 (LAHI…IGVG) and 49-69 (LFIG…VALL).

The protein belongs to the ATPase C chain family. As to quaternary structure, F-type ATPases have 2 components, F(1) - the catalytic core - and F(0) - the membrane proton channel. F(1) has five subunits: alpha(3), beta(3), gamma(1), delta(1), epsilon(1). F(0) has three main subunits: a(1), b(2) and c(10-14). The alpha and beta chains form an alternating ring which encloses part of the gamma chain. F(1) is attached to F(0) by a central stalk formed by the gamma and epsilon chains, while a peripheral stalk is formed by the delta and b chains.

It is found in the cell inner membrane. Its function is as follows. F(1)F(0) ATP synthase produces ATP from ADP in the presence of a proton or sodium gradient. F-type ATPases consist of two structural domains, F(1) containing the extramembraneous catalytic core and F(0) containing the membrane proton channel, linked together by a central stalk and a peripheral stalk. During catalysis, ATP synthesis in the catalytic domain of F(1) is coupled via a rotary mechanism of the central stalk subunits to proton translocation. In terms of biological role, key component of the F(0) channel; it plays a direct role in translocation across the membrane. A homomeric c-ring of between 10-14 subunits forms the central stalk rotor element with the F(1) delta and epsilon subunits. The chain is ATP synthase subunit c from Ruegeria pomeroyi (strain ATCC 700808 / DSM 15171 / DSS-3) (Silicibacter pomeroyi).